We begin with the raw amino-acid sequence, 368 residues long: Ribosomal RNA large subunit methyltransferase M (368 aa).

Residues serine 192, alanine 225–glycine 228, aspartate 244, aspartate 264, and aspartate 281 each bind S-adenosyl-L-methionine. The Proton acceptor role is filled by lysine 310.

It belongs to the class I-like SAM-binding methyltransferase superfamily. RNA methyltransferase RlmE family. RlmM subfamily. In terms of assembly, monomer.

It is found in the cytoplasm. It carries out the reaction cytidine(2498) in 23S rRNA + S-adenosyl-L-methionine = 2'-O-methylcytidine(2498) in 23S rRNA + S-adenosyl-L-homocysteine + H(+). Functionally, catalyzes the 2'-O-methylation at nucleotide C2498 in 23S rRNA. The protein is Ribosomal RNA large subunit methyltransferase M of Colwellia psychrerythraea (strain 34H / ATCC BAA-681) (Vibrio psychroerythus).